A 350-amino-acid chain; its full sequence is Putative [LysW]-lysine/[LysW]-ornithine hydrolase (350 aa).

His-72 is a Zn(2+) binding site. The active site involves Asp-74. Asp-96 lines the Zn(2+) pocket. Residue Glu-128 is the Proton acceptor of the active site. Glu-129, Glu-152, and His-321 together coordinate Zn(2+).

This sequence belongs to the peptidase M20A family. LysK subfamily. The cofactor is Zn(2+). It depends on Co(2+) as a cofactor.

It is found in the cytoplasm. The enzyme catalyses [amino-group carrier protein]-C-terminal-gamma-(L-lysyl)-L-glutamate + H2O = [amino-group carrier protein]-C-terminal-L-glutamate + L-lysine. It carries out the reaction [amino-group carrier protein]-C-terminal-gamma-(L-ornithyl)-L-glutamate + H2O = [amino-group carrier protein]-C-terminal-L-glutamate + L-ornithine. Its pathway is amino-acid biosynthesis; L-lysine biosynthesis via AAA pathway; L-lysine from L-alpha-aminoadipate (Thermus route): step 5/5. The protein operates within amino-acid biosynthesis; L-arginine biosynthesis. Catalyzes the release of L-lysine from [LysW]-gamma-L-lysine and the release of L-ornithine from [LysW]-L-ornithine. This chain is Putative [LysW]-lysine/[LysW]-ornithine hydrolase, found in Aeropyrum pernix (strain ATCC 700893 / DSM 11879 / JCM 9820 / NBRC 100138 / K1).